Here is a 121-residue protein sequence, read N- to C-terminus: ATP synthase epsilon chain (121 aa).

The protein belongs to the ATPase epsilon chain family. As to quaternary structure, F-type ATPases have 2 components, CF(1) - the catalytic core - and CF(0) - the membrane proton channel. CF(1) has five subunits: alpha(3), beta(3), gamma(1), delta(1), epsilon(1). CF(0) has three main subunits: a, b and c.

It is found in the cell membrane. In terms of biological role, produces ATP from ADP in the presence of a proton gradient across the membrane. This is ATP synthase epsilon chain from Mycobacterium leprae (strain Br4923).